The sequence spans 327 residues: Lactosylceramide 4-alpha-galactosyltransferase (327 aa).

Residues 166 to 168 (DTD) carry the DXD motif motif.

It belongs to the glycosyltransferase 32 family.

It is found in the golgi apparatus membrane. The catalysed reaction is a beta-D-Gal-(1-&gt;4)-beta-D-Glc-(1&lt;-&gt;1)-Cer(d18:1(4E)) + UDP-alpha-D-galactose = a globoside Gb3Cer (d18:1(4E)) + UDP + H(+). It carries out the reaction a beta-D-Gal-(1&lt;-&gt;1')-ceramide + UDP-alpha-D-galactose = alpha-D-Gal-(1-&gt;4)-beta-D-Gal-(1&lt;-&gt;1')-Cer + UDP + H(+). Its pathway is glycolipid biosynthesis. Functionally, catalyzes the transfer of galactose from UDP-alpha-D-galactose to lactosylceramide/beta-D-galactosyl-(1-&gt;4)-beta-D-glucosyl-(1&lt;-&gt;1)-ceramide(d18:1(4E)) to produce globotriaosylceramide/globoside Gb3Cer (d18:1(4E)). Also able to transfer galactose to galactosylceramide/beta-D-Gal-(1&lt;-&gt;1')-Cer. Globoside Gb3Cer is a glycosphingolipid of the globo serie, one of the major types of neutral root structures of glycosphingolipids, that constitute a significant portion of mammalian cell membranes. The sequence is that of Lactosylceramide 4-alpha-galactosyltransferase (A4GALT) from Gorilla gorilla gorilla (Western lowland gorilla).